Consider the following 226-residue polypeptide: SPI-1 type 3 secretion system stator protein (226 aa).

As to quaternary structure, the core secretion machinery of the T3SS is composed of approximately 20 different proteins, including cytoplasmic components, a base, an export apparatus and a needle. This subunit is part of the cytosolic complex. Interacts directly with InvC/SctN1 (T3SS-1 ATPase) and SpaO/SctQ (the major sorting platform component).

Its subcellular location is the cytoplasm. Its function is as follows. Component of the type III secretion system (T3SS), also called injectisome, which is used to inject bacterial effector proteins into eukaryotic host cells. Acts as a regulator of the InvC/SctN1 ATPase activity. Required for invasion and secretion. The polypeptide is SPI-1 type 3 secretion system stator protein (Salmonella typhimurium (strain SL1344)).